Reading from the N-terminus, the 108-residue chain is Putative lipid-binding protein AIR1B (108 aa).

An N-terminal signal peptide occupies residues 1 to 23; that stretch reads MAPRTSLALFVSLNLLFFTCTSA. 3 disulfide bridges follow: Cys28/Cys55, Cys35/Cys54, and Cys71/Cys107.

Belongs to the plant LTP family. PEARLI1 subfamily.

The protein localises to the secreted. The polypeptide is Putative lipid-binding protein AIR1B (AIR1B) (Arabidopsis thaliana (Mouse-ear cress)).